A 1168-amino-acid polypeptide reads, in one-letter code: Transcription-repair-coupling factor (1168 aa).

Residues 633–794 (DMQKSRPMDR…MLGVRDLSVI (162 aa)) enclose the Helicase ATP-binding domain. 646-653 (GDVGYGKT) is an ATP binding site. A DEEQ box motif is present at residues 747-750 (DEEQ). The region spanning 808-969 (VLEQNMSFIK…GFKIAMRDLN (162 aa)) is the Helicase C-terminal domain.

The protein in the N-terminal section; belongs to the UvrB family. It in the C-terminal section; belongs to the helicase family. RecG subfamily.

Its subcellular location is the cytoplasm. Its function is as follows. Couples transcription and DNA repair by recognizing RNA polymerase (RNAP) stalled at DNA lesions. Mediates ATP-dependent release of RNAP and its truncated transcript from the DNA, and recruitment of nucleotide excision repair machinery to the damaged site. The protein is Transcription-repair-coupling factor of Staphylococcus aureus (strain USA300).